The following is a 155-amino-acid chain: MGRRFDYSFQNFDPERMARASGRDLRISPKLAVEVCRELRGMMLNDALRYLDDVIALRRPVPLKRYNDSQGHKPGKGFGPGRYPVKVAKAIKKVLLNAQNNAKQKGLDPDKLRIIHIAAHRGPVLRGWYPRAFGRPTPFNEQTTHIEVVVEEVRR.

This sequence belongs to the universal ribosomal protein uL22 family. In terms of assembly, part of the 50S ribosomal subunit.

This protein binds specifically to 23S rRNA. It makes multiple contacts with different domains of the 23S rRNA in the assembled 50S subunit and ribosome. In terms of biological role, the globular domain of the protein is located near the polypeptide exit tunnel on the outside of the subunit, while an extended beta-hairpin is found that lines the wall of the exit tunnel in the center of the 70S ribosome. In Pyrococcus abyssi (strain GE5 / Orsay), this protein is Large ribosomal subunit protein uL22.